A 662-amino-acid chain; its full sequence is Calcium-dependent protease (662 aa).

A Peptidase S8 domain is found at 196–529; it reads QWHLKETTIG…YGRINALKAV (334 aa). Active-site charge relay system residues include aspartate 233, histidine 270, and serine 466. The P/Homo B domain maps to 535–662; the sequence is AQPEPVSIFT…IRSLTIELGF (128 aa).

The protein belongs to the peptidase S8 family.

The protein resides in the cytoplasm. Degrades phycobiliproteins in vitro. Has a substrate specificity similar to that of trypsin. This is Calcium-dependent protease (prcA) from Nostoc sp. (strain PCC 7120 / SAG 25.82 / UTEX 2576).